Reading from the N-terminus, the 194-residue chain is Ancillary SecYEG translocon subunit (194 aa).

At 1–10 (MHLNKMKKVS) the chain is on the cytoplasmic side. A helical membrane pass occupies residues 11 to 31 (LKTYLVLFFLIFFIFCSFWFI). At 32–194 (KPKEKKLKLE…INMKINEIKR (163 aa)) the chain is on the periplasmic side.

Belongs to the YfgM family. As to quaternary structure, interacts with the SecYEG translocon. Forms a complex with PpiD.

It localises to the cell inner membrane. Functionally, may mediate protein transfer from the SecYEG translocon to the periplasmic chaperone network via its periplasmic C-terminal region. The polypeptide is Ancillary SecYEG translocon subunit (Buchnera aphidicola subsp. Schizaphis graminum (strain Sg)).